Here is a 158-residue protein sequence, read N- to C-terminus: MLNQLDNLTERVRGSNKLVDRWLHVRKHLLVAYYNLVGIKPGKESYMRLNEKALDDFCQSLVDYLSAGHFSIYERILHKLEGNGQLARAAKIWPQLEANTQQIMDDYDSSLETAIDHDNYLEFQQVLSDIGEALEARFVLEDKLILLVLDAARVKHPA.

It belongs to the Rsd/AlgQ family. In terms of assembly, interacts with RpoD.

It localises to the cytoplasm. Functionally, binds RpoD and negatively regulates RpoD-mediated transcription activation by preventing the interaction between the primary sigma factor RpoD with the catalytic core of the RNA polymerase and with promoter DNA. May be involved in replacement of the RNA polymerase sigma subunit from RpoD to RpoS during the transition from exponential growth to the stationary phase. This is Regulator of sigma D from Escherichia coli O6:H1 (strain CFT073 / ATCC 700928 / UPEC).